The primary structure comprises 483 residues: MHQFTLAEIARGLADKSFSSEELTRALLARIKQLDPQINSFISVTEDLALGQARAADARRAAGETGALLGAPIAHKDLFCTNGVRTSCGSKMLDNFKAPYDATVVAKLAEAGMVTLGKTNMDEFAMGSANESSHYGAVKNPWNLEHVPGGSSGGSAAAVAARLLPATTGTDTGGSIRQPAALTNLTGLKPTYGRVSRWGMIAYASSLDQGGPLARTAEDCALLLQGMAGFDAKDSTSIEEPVPDYSANLNASLQGLRIGLPKEYFGAGLDPRIAELVQASVKELEKLGAVVKEISLPNMQHAIPAYYVIAPAEASSNLSRFDGVRFGYRCEEPKDLTDLYKRSRGEGFGVEVQRRIMVGTYALSAGYYDAYYVKAQQIRRLIKNDFMAAFNDVDLILGPTTPNPAWKLGAKSSDPVAAYLEDVYTINANLAGLPGLSMPAGFVDGLPVGVQLLAPYFQEGRLLNVAHRYQQVTDWHTRAPNGF.

Active-site charge relay system residues include lysine 76 and serine 151. The active-site Acyl-ester intermediate is the serine 175.

It belongs to the amidase family. GatA subfamily. As to quaternary structure, heterotrimer of A, B and C subunits.

It carries out the reaction L-glutamyl-tRNA(Gln) + L-glutamine + ATP + H2O = L-glutaminyl-tRNA(Gln) + L-glutamate + ADP + phosphate + H(+). Allows the formation of correctly charged Gln-tRNA(Gln) through the transamidation of misacylated Glu-tRNA(Gln) in organisms which lack glutaminyl-tRNA synthetase. The reaction takes place in the presence of glutamine and ATP through an activated gamma-phospho-Glu-tRNA(Gln). The protein is Glutamyl-tRNA(Gln) amidotransferase subunit A of Pseudomonas putida (strain GB-1).